Consider the following 186-residue polypeptide: Nicotinamide-nucleotide adenylyltransferase (186 aa).

The protein belongs to the archaeal NMN adenylyltransferase family.

The protein localises to the cytoplasm. The enzyme catalyses beta-nicotinamide D-ribonucleotide + ATP + H(+) = diphosphate + NAD(+). It participates in cofactor biosynthesis; NAD(+) biosynthesis; NAD(+) from nicotinamide D-ribonucleotide: step 1/1. The chain is Nicotinamide-nucleotide adenylyltransferase from Thermococcus sibiricus (strain DSM 12597 / MM 739).